We begin with the raw amino-acid sequence, 88 residues long: Small ribosomal subunit protein uS15 (88 aa).

It belongs to the universal ribosomal protein uS15 family. In terms of assembly, part of the 30S ribosomal subunit. Forms a bridge to the 50S subunit in the 70S ribosome, contacting the 23S rRNA.

In terms of biological role, one of the primary rRNA binding proteins, it binds directly to 16S rRNA where it helps nucleate assembly of the platform of the 30S subunit by binding and bridging several RNA helices of the 16S rRNA. Forms an intersubunit bridge (bridge B4) with the 23S rRNA of the 50S subunit in the ribosome. The chain is Small ribosomal subunit protein uS15 from Finegoldia magna (strain ATCC 29328 / DSM 20472 / WAL 2508) (Peptostreptococcus magnus).